The following is a 410-amino-acid chain: Peptidase T (410 aa).

His78 lines the Zn(2+) pocket. The active site involves Asp80. Position 140 (Asp140) interacts with Zn(2+). Glu173 functions as the Proton acceptor in the catalytic mechanism. Positions 174, 196, and 379 each coordinate Zn(2+).

Belongs to the peptidase M20B family. It depends on Zn(2+) as a cofactor.

The protein localises to the cytoplasm. It carries out the reaction Release of the N-terminal residue from a tripeptide.. Functionally, cleaves the N-terminal amino acid of tripeptides. The sequence is that of Peptidase T from Pectobacterium atrosepticum (strain SCRI 1043 / ATCC BAA-672) (Erwinia carotovora subsp. atroseptica).